Consider the following 529-residue polypeptide: Zinc metalloproteinase MspA (529 aa).

The signal sequence occupies residues 1–24 (MHHNYYLSPLAVALALGMVSPAKA). Positions 25 to 204 (ADPILLQNAS…PFVQWNDIKT (180 aa)) are excised as a propeptide. H365 contributes to the Zn(2+) binding site. The active site involves E366. Positions 369 and 389 each coordinate Zn(2+). H451 serves as the catalytic Proton donor.

The protein belongs to the peptidase M4 family. It depends on Zn(2+) as a cofactor.

This chain is Zinc metalloproteinase MspA (mspA), found in Legionella longbeachae.